The following is a 123-amino-acid chain: Ribosome-binding factor A (123 aa).

This sequence belongs to the RbfA family. As to quaternary structure, monomer. Binds 30S ribosomal subunits, but not 50S ribosomal subunits or 70S ribosomes.

The protein resides in the cytoplasm. Functionally, one of several proteins that assist in the late maturation steps of the functional core of the 30S ribosomal subunit. Associates with free 30S ribosomal subunits (but not with 30S subunits that are part of 70S ribosomes or polysomes). Required for efficient processing of 16S rRNA. May interact with the 5'-terminal helix region of 16S rRNA. The chain is Ribosome-binding factor A from Neisseria meningitidis serogroup C (strain 053442).